The primary structure comprises 146 residues: 3-hydroxyacyl-[acyl-carrier-protein] dehydratase FabZ (146 aa).

His49 is an active-site residue.

The protein belongs to the thioester dehydratase family. FabZ subfamily.

The protein localises to the cytoplasm. It catalyses the reaction a (3R)-hydroxyacyl-[ACP] = a (2E)-enoyl-[ACP] + H2O. Its function is as follows. Involved in unsaturated fatty acids biosynthesis. Catalyzes the dehydration of short chain beta-hydroxyacyl-ACPs and long chain saturated and unsaturated beta-hydroxyacyl-ACPs. The chain is 3-hydroxyacyl-[acyl-carrier-protein] dehydratase FabZ from Pseudomonas entomophila (strain L48).